Reading from the N-terminus, the 210-residue chain is CLAVATA3/ESR (CLE)-related protein 4D (210 aa).

Positions 1–21 (MAKNAMLCLLILSVVLALAFA) are cleaved as a signal peptide. Positions 21-83 (ATNKKDDEEP…SNQLPNNNWM (63 aa)) are required for secretion from the host cytoplasm to the host apoplasm. Asn-32 and Asn-59 each carry an N-linked (GlcNAc...) asparagine glycan. The interval 115–210 (RRKTGTHSQR…APAGPDPIHH (96 aa)) is disordered. Composition is skewed to basic and acidic residues over residues 125–137 (HHEE…EKRG), 144–158 (PIHH…EKRG), 165–179 (PIHH…EKRV), and 186–200 (PIHH…EKRG). The stretch at 127–135 (EETTLEQEK) is one A-1 repeat. The tract at residues 129 to 198 (TTLEQEKRGA…HQDTKFEQEK (70 aa)) is 4 X approximate repeat A. Residues 136-147 (RGAPAGPDPIHH) form a CLE-1 repeat. The segment at 136 to 210 (RGAPAGPDPI…APAGPDPIHH (75 aa)) is 4 X approximate repeat CLE. Residues 148 to 156 (QDTTFEQEK) form an A-2 repeat. Residues 157–168 (RGAPAGPDPIHH) form a CLE-2 repeat. The stretch at 169–177 (QDTTLEQEK) is one A-3 repeat. One copy of the CLE-3 repeat lies at 178–189 (RVAGAGPDPIHH). One copy of the A-4 repeat lies at 190–198 (QDTKFEQEK). The CLE-4 repeat unit spans residues 199–210 (RGAPAGPDPIHH).

This sequence belongs to the CLV3/ESR signal peptide family. In terms of tissue distribution, highly expressed exclusively within the dorsal esophageal gland cell during syncytium formation in host plants.

It localises to the secreted. Its subcellular location is the host cytoplasm. It is found in the host extracellular space. The protein resides in the extracellular space. The protein localises to the apoplast. In terms of biological role, mimics host plant CLE extracellular signal peptides that regulate cell fate. May play a role in the differentiation or division of feeding cells (syncytia) induced in plant roots during infection. This is CLAVATA3/ESR (CLE)-related protein 4D (CLE-4D) from Globodera rostochiensis (Golden nematode worm).